The primary structure comprises 222 residues: uncharacterized protein (222 aa).

Transmembrane regions (helical) follow at residues 23–43, 67–87, 157–177, and 187–207; these read FFAA…TGLL, IWVL…IGYL, IVGG…LGNV, and IILG…WHGY.

It belongs to the DedA family.

It localises to the cell membrane. This is an uncharacterized protein from Mycobacterium leprae (strain TN).